Consider the following 353-residue polypeptide: RNA 3'-terminal phosphate cyclase (353 aa).

ATP is bound by residues Q100 and 289–292; that span reads HMSD. H315 (tele-AMP-histidine intermediate) is an active-site residue.

Belongs to the RNA 3'-terminal cyclase family. Type 1 subfamily.

The protein resides in the cytoplasm. It catalyses the reaction a 3'-end 3'-phospho-ribonucleotide-RNA + ATP = a 3'-end 2',3'-cyclophospho-ribonucleotide-RNA + AMP + diphosphate. Its function is as follows. Catalyzes the conversion of 3'-phosphate to a 2',3'-cyclic phosphodiester at the end of RNA. The mechanism of action of the enzyme occurs in 3 steps: (A) adenylation of the enzyme by ATP; (B) transfer of adenylate to an RNA-N3'P to produce RNA-N3'PP5'A; (C) and attack of the adjacent 2'-hydroxyl on the 3'-phosphorus in the diester linkage to produce the cyclic end product. The biological role of this enzyme is unknown but it is likely to function in some aspects of cellular RNA processing. The sequence is that of RNA 3'-terminal phosphate cyclase from Ignicoccus hospitalis (strain KIN4/I / DSM 18386 / JCM 14125).